A 543-amino-acid polypeptide reads, in one-letter code: Telomerase Cajal body protein 1 homolog (543 aa).

Residues 95 to 128 (GRPKNAVESPHAGVPMETSLAAEEEANGDEEEES) are disordered. Positions 116 to 127 (AEEEANGDEEEE) are enriched in acidic residues. WD repeat units follow at residues 237–283 (PEGG…LRCS), 291–329 (DEVM…RFCD), and 378–421 (GHKG…QPLV).

This sequence belongs to the TCAB1 family.

The protein resides in the nucleus. It localises to the cajal body. Its function is as follows. RNA chaperone that plays a key role in Cajal body formation. Specifically recognizes and binds the Cajal body box (CAB box) present in both small Cajal body RNAs (scaRNAs). Probably acts by mediating localization of scaRNAs to Cajal bodies. In Drosophila melanogaster (Fruit fly), this protein is Telomerase Cajal body protein 1 homolog.